The following is an 833-amino-acid chain: Leucine--tRNA ligase (833 aa).

The 'HIGH' region signature appears at 41–52 (PYPSGAGLHVGH). The short motif at 610–614 (KMSKS) is the 'KMSKS' region element. Lysine 613 is an ATP binding site.

This sequence belongs to the class-I aminoacyl-tRNA synthetase family.

It is found in the cytoplasm. It carries out the reaction tRNA(Leu) + L-leucine + ATP = L-leucyl-tRNA(Leu) + AMP + diphosphate. The sequence is that of Leucine--tRNA ligase from Streptococcus pyogenes serotype M6 (strain ATCC BAA-946 / MGAS10394).